The following is a 337-amino-acid chain: MDLQEAAMEARNGHRIPPTEEKVIIDTDPGIDDSVAIMMAFEAPGVKVVGLTTIFGNCTTSHATRNALILCDRAGRPEVPVAEGSAEPLKGGKPHVADFVHGSDGLGNTSFPDPTTTNKVEQSAAEFLVDKVSESPGEISVLALGPLTNIALAMKKDSSFASKVKRIVVLGGAFFAAGNATPSAEANIHSDPEAADIVFTSGADIYVVGLNITTQVYFTDKDMLELRNSKGKHAQFLCDICKFYRDWHVHSYGVDALFLHDPVSFTALVHPEYFTFKKGVVRVETQGICKGHTSMDMGLKKWNSDNPWTGYSPISVAWTVDVPKVLAYAKELLFNAQ.

Histidine 260 is a catalytic residue.

The protein belongs to the IUNH family.

The protein localises to the cytoplasm. The catalysed reaction is uridine + H2O = D-ribose + uracil. Its function is as follows. Involved in pyrimidine breakdown. The sequence is that of Probable uridine nucleosidase 2 (URH2) from Oryza sativa subsp. japonica (Rice).